Consider the following 1099-residue polypeptide: Inverted formin-2 (1099 aa).

Residues 1-330 enclose the GBD/FH3 domain; that stretch reads MSLTEGAHTK…RAVLLADDCQ (330 aa). Composition is skewed to basic and acidic residues over residues 348–359 and 367–385; these read SSKEKRKTDKCT and QTDK…KKDP. Disordered stretches follow at residues 348–391, 432–509, and 1000–1019; these read SSKE…SGIP, PSPP…PTPP, and AEKR…KGEN. The 144-residue stretch at 426–569 folds into the FH1 domain; sequence TCSSVLPSPP…GMLPPPPPLP (144 aa). Pro residues predominate over residues 452–499; it reads PLPPPPPPLPGTELSPPPPGMVALSLPPPPPPLPGMGGMLPPPPPPLP. An FH2 domain is found at 621 to 1009; sequence FLKVNKPTLK…AEKRKQQIAD (389 aa). The stretch at 907–1019 forms a coiled coil; sequence LKKLRDLQNK…EETKRQKGEN (113 aa). The region spanning 1037-1052 is the WH2 domain; sequence DDLLADIKKGFQLRKT. Residues 1064–1085 form a disordered region; it reads KTLSSETNRTDIQHVGKRPEVP. Residues 1071-1083 show a composition bias toward basic and acidic residues; that stretch reads NRTDIQHVGKRPE.

This sequence belongs to the formin homology family.

The protein is Inverted formin-2 (inf2) of Xenopus laevis (African clawed frog).